We begin with the raw amino-acid sequence, 135 residues long: Crossover junction endodeoxyribonuclease Hje (135 aa).

Mg(2+) contacts are provided by Glu-10, Asp-39, and Glu-52.

This sequence belongs to the Holliday junction resolvase Hjc family. Hje subfamily. In terms of assembly, homodimer. The cofactor is Mg(2+).

It catalyses the reaction Endonucleolytic cleavage at a junction such as a reciprocal single-stranded crossover between two homologous DNA duplexes (Holliday junction).. A structure-specific endonuclease that resolves Holliday junction (HJ) intermediates during genetic recombination. Acts only on 4-way DNA junctions in a sequence non-specific manner; introduces paired nicks in opposing strands 2 bases 3' of the point of strand exchange only on continuous strands of 4-way junction DNA. Cleaves both mobile and immobile junctions. Plays a more direct role in DNA repair than Hjc. Overexpression of this protein decreases the growth rate, and leads to genomic instability, and global transcriptomic changes. This Saccharolobus islandicus (strain REY15A) (Sulfolobus islandicus) protein is Crossover junction endodeoxyribonuclease Hje.